The sequence spans 158 residues: NAD(P)H-quinone oxidoreductase subunit J, chloroplastic (158 aa).

It belongs to the complex I 30 kDa subunit family. NDH is composed of at least 16 different subunits, 5 of which are encoded in the nucleus.

The protein localises to the plastid. Its subcellular location is the chloroplast thylakoid membrane. The catalysed reaction is a plastoquinone + NADH + (n+1) H(+)(in) = a plastoquinol + NAD(+) + n H(+)(out). It carries out the reaction a plastoquinone + NADPH + (n+1) H(+)(in) = a plastoquinol + NADP(+) + n H(+)(out). NDH shuttles electrons from NAD(P)H:plastoquinone, via FMN and iron-sulfur (Fe-S) centers, to quinones in the photosynthetic chain and possibly in a chloroplast respiratory chain. The immediate electron acceptor for the enzyme in this species is believed to be plastoquinone. Couples the redox reaction to proton translocation, and thus conserves the redox energy in a proton gradient. This chain is NAD(P)H-quinone oxidoreductase subunit J, chloroplastic, found in Capsella bursa-pastoris (Shepherd's purse).